Consider the following 304-residue polypeptide: Oxygen-dependent coproporphyrinogen-III oxidase (304 aa).

Ser-93 contributes to the substrate binding site. A divalent metal cation-binding residues include His-97 and His-107. The active-site Proton donor is His-107. Position 109–111 (109–111 (NVR)) interacts with substrate. The a divalent metal cation site is built by His-146 and His-176. An important for dimerization region spans residues 241 to 276 (YVEFNLVYDRGTLFGLQSGGRTESILMSLPPQVRWG). Residue 259 to 261 (GGR) coordinates substrate.

Belongs to the aerobic coproporphyrinogen-III oxidase family. In terms of assembly, homodimer. A divalent metal cation is required as a cofactor.

It localises to the cytoplasm. It carries out the reaction coproporphyrinogen III + O2 + 2 H(+) = protoporphyrinogen IX + 2 CO2 + 2 H2O. The protein operates within porphyrin-containing compound metabolism; protoporphyrin-IX biosynthesis; protoporphyrinogen-IX from coproporphyrinogen-III (O2 route): step 1/1. Functionally, involved in the heme biosynthesis. Catalyzes the aerobic oxidative decarboxylation of propionate groups of rings A and B of coproporphyrinogen-III to yield the vinyl groups in protoporphyrinogen-IX. This is Oxygen-dependent coproporphyrinogen-III oxidase from Pseudomonas syringae pv. syringae (strain B728a).